We begin with the raw amino-acid sequence, 1212 residues long: Dermatan-sulfate epimerase-like protein (1212 aa).

The first 20 residues, 1–20 (MALMFTGHLLFLALLMFAFS), serve as a signal peptide directing secretion. N-linked (GlcNAc...) asparagine glycosylation is found at Asn-28, Asn-666, Asn-688, and Asn-709. Transmembrane regions (helical) follow at residues 764–784 (IIFP…CISL) and 803–823 (WILI…WSTC). Asn-874 carries N-linked (GlcNAc...) asparagine glycosylation.

The protein belongs to the dermatan-sulfate isomerase family. As to expression, expressed in different brain areas as well as in multiple other peripheral tissues.

The protein resides in the membrane. This chain is Dermatan-sulfate epimerase-like protein (DSEL), found in Homo sapiens (Human).